Consider the following 276-residue polypeptide: 4-deoxy-L-threo-5-hexosulose-uronate ketol-isomerase (276 aa).

Zn(2+)-binding residues include His-194, His-196, Glu-201, and His-243.

The protein belongs to the KduI family. Zn(2+) serves as cofactor.

The catalysed reaction is 5-dehydro-4-deoxy-D-glucuronate = 3-deoxy-D-glycero-2,5-hexodiulosonate. It functions in the pathway glycan metabolism; pectin degradation; 2-dehydro-3-deoxy-D-gluconate from pectin: step 4/5. In terms of biological role, catalyzes the isomerization of 5-dehydro-4-deoxy-D-glucuronate to 3-deoxy-D-glycero-2,5-hexodiulosonate. The polypeptide is 4-deoxy-L-threo-5-hexosulose-uronate ketol-isomerase (Halalkalibacterium halodurans (strain ATCC BAA-125 / DSM 18197 / FERM 7344 / JCM 9153 / C-125) (Bacillus halodurans)).